Here is a 262-residue protein sequence, read N- to C-terminus: 14-3-3 protein I (262 aa).

This sequence belongs to the 14-3-3 family. As to quaternary structure, homodimer. Forms a complex composed of CDPK1, PKA regulatory subunit PKAr and 14-3-3I; the complex is formed in merozoites in response to low extracellular level of K(+) and may play a role in microneme secretion. Interacts with CDPK1 (when phosphorylated) in a Ca(2+)-independent manner; the interaction does not regulate CDPK1 catalytic activity but is required for merozoite invasion of host erythrocytes. Interacts with PKA regulatory subunit PKAr (when phosphorylated) in a Ca(2+)-dependent manner. Interacts with histone H3 (when phosphorylated at 'Ser-28' or when phosphorylated at 'Ser-28' and 'Ser-32').

It is found in the cell membrane. It localises to the cytoplasm. Its subcellular location is the nucleus. Adapter protein which binds to its partners, usually via a phosphoserine or phosphothreonine motif. Binding generally results in the modulation of the activity and/or cellular localization of the binding partner. Via its interaction with CDPK1 and PKAr, involved in merozoite microneme secretion and thus in merozoite invasion of host erythrocytes. This chain is 14-3-3 protein I, found in Plasmodium falciparum (isolate 3D7).